Reading from the N-terminus, the 103-residue chain is Large ribosomal subunit protein bL21 (103 aa).

The protein belongs to the bacterial ribosomal protein bL21 family. In terms of assembly, part of the 50S ribosomal subunit. Contacts protein L20.

This protein binds to 23S rRNA in the presence of protein L20. The protein is Large ribosomal subunit protein bL21 of Nocardia farcinica (strain IFM 10152).